The primary structure comprises 237 residues: Adenosine 5'-phosphosulfate reductase (237 aa).

[4Fe-4S] cluster-binding residues include Cys-123, Cys-124, Cys-206, and Cys-209. Cys-232 serves as the catalytic Nucleophile; cysteine thiosulfonate intermediate.

This sequence belongs to the PAPS reductase family. CysH subfamily. [4Fe-4S] cluster is required as a cofactor.

It is found in the cytoplasm. It catalyses the reaction [thioredoxin]-disulfide + sulfite + AMP + 2 H(+) = adenosine 5'-phosphosulfate + [thioredoxin]-dithiol. Its pathway is sulfur metabolism; hydrogen sulfide biosynthesis; sulfite from sulfate. In terms of biological role, catalyzes the formation of sulfite from adenosine 5'-phosphosulfate (APS) using thioredoxin as an electron donor. This is Adenosine 5'-phosphosulfate reductase from Mycobacteroides abscessus (strain ATCC 19977 / DSM 44196 / CCUG 20993 / CIP 104536 / JCM 13569 / NCTC 13031 / TMC 1543 / L948) (Mycobacterium abscessus).